Reading from the N-terminus, the 277-residue chain is Phosphatidylglycerol--prolipoprotein diacylglyceryl transferase (277 aa).

3 helical membrane passes run 16–36, 62–82, and 101–121; these read FFQI…FYFL, LLFF…VLFY, and GMAF…FAHL. R145 lines the a 1,2-diacyl-sn-glycero-3-phospho-(1'-sn-glycerol) pocket. The next 2 membrane-spanning stretches (helical) occupy residues 214–234 and 243–263; these read PIWG…RFIA and FLGL…PMIV.

This sequence belongs to the Lgt family.

It localises to the cell inner membrane. It catalyses the reaction L-cysteinyl-[prolipoprotein] + a 1,2-diacyl-sn-glycero-3-phospho-(1'-sn-glycerol) = an S-1,2-diacyl-sn-glyceryl-L-cysteinyl-[prolipoprotein] + sn-glycerol 1-phosphate + H(+). It participates in protein modification; lipoprotein biosynthesis (diacylglyceryl transfer). In terms of biological role, catalyzes the transfer of the diacylglyceryl group from phosphatidylglycerol to the sulfhydryl group of the N-terminal cysteine of a prolipoprotein, the first step in the formation of mature lipoproteins. The protein is Phosphatidylglycerol--prolipoprotein diacylglyceryl transferase of Leptothrix cholodnii (strain ATCC 51168 / LMG 8142 / SP-6) (Leptothrix discophora (strain SP-6)).